We begin with the raw amino-acid sequence, 428 residues long: Trigger factor (428 aa).

The PPIase FKBP-type domain maps to 163–248; it reads GDMVIIDYKG…IHEIKEKEVP (86 aa).

The protein belongs to the FKBP-type PPIase family. Tig subfamily.

It localises to the cytoplasm. It catalyses the reaction [protein]-peptidylproline (omega=180) = [protein]-peptidylproline (omega=0). Involved in protein export. Acts as a chaperone by maintaining the newly synthesized protein in an open conformation. Functions as a peptidyl-prolyl cis-trans isomerase. This Alkaliphilus oremlandii (strain OhILAs) (Clostridium oremlandii (strain OhILAs)) protein is Trigger factor.